Reading from the N-terminus, the 153-residue chain is Endoribonuclease YbeY (153 aa).

Zn(2+)-binding residues include histidine 114, histidine 118, and histidine 124.

The protein belongs to the endoribonuclease YbeY family. It depends on Zn(2+) as a cofactor.

Its subcellular location is the cytoplasm. Single strand-specific metallo-endoribonuclease involved in late-stage 70S ribosome quality control and in maturation of the 3' terminus of the 16S rRNA. This Nitrosococcus oceani (strain ATCC 19707 / BCRC 17464 / JCM 30415 / NCIMB 11848 / C-107) protein is Endoribonuclease YbeY.